The sequence spans 345 residues: Tetraacyldisaccharide 4'-kinase (345 aa).

ATP is bound at residue 61–68 (TAGGTGKT).

It belongs to the LpxK family.

The catalysed reaction is a lipid A disaccharide + ATP = a lipid IVA + ADP + H(+). The protein operates within glycolipid biosynthesis; lipid IV(A) biosynthesis; lipid IV(A) from (3R)-3-hydroxytetradecanoyl-[acyl-carrier-protein] and UDP-N-acetyl-alpha-D-glucosamine: step 6/6. Functionally, transfers the gamma-phosphate of ATP to the 4'-position of a tetraacyldisaccharide 1-phosphate intermediate (termed DS-1-P) to form tetraacyldisaccharide 1,4'-bis-phosphate (lipid IVA). This is Tetraacyldisaccharide 4'-kinase from Xanthomonas euvesicatoria pv. vesicatoria (strain 85-10) (Xanthomonas campestris pv. vesicatoria).